We begin with the raw amino-acid sequence, 283 residues long: MRYIGAHVSASGGVQNAPLNAAKIGANAFALFVKNQRQWSAKPLESAAISEFEQNCKAANISPRHILPHDSYLINLGHYDDAKREQSFNAFVDEIERVSELGLELLNFHPGSHLNEISQNECLNLIAECMNEALKRTDGVKLVIENTAGQGSNLGFRFEQLAYLIERTDDKSRVGVCIDTCHAFAAGYDLRTPEAYKKTMDEFDAVIGYEFLSAMHLNDCKFGLNSRKDRHESLGKGFLGLKAFECIMNDEHIGEIPMILETIDDSIWADEIKILRNLQKGKK.

9 residues coordinate Zn(2+): His69, His109, Glu145, Asp179, His182, His216, Asp229, His231, and Glu261.

Belongs to the AP endonuclease 2 family. The cofactor is Zn(2+).

The enzyme catalyses Endonucleolytic cleavage to 5'-phosphooligonucleotide end-products.. In terms of biological role, endonuclease IV plays a role in DNA repair. It cleaves phosphodiester bonds at apurinic or apyrimidinic (AP) sites, generating a 3'-hydroxyl group and a 5'-terminal sugar phosphate. The chain is Probable endonuclease 4 from Campylobacter curvus (strain 525.92).